A 769-amino-acid polypeptide reads, in one-letter code: Acetyl-coenzyme A carboxylase carboxyl transferase subunit alpha, chloroplastic (769 aa).

The N-terminal 54 residues, 1–54 (MASISHSSLALGGASSASASDYLRSSSNGVNGVPLKTLGRAVFTTIRRKDLAVT), are a transit peptide targeting the chloroplast. In terms of domain architecture, CoA carboxyltransferase C-terminal spans 132 to 385 (LENKYRQALK…KIAINENMNE (254 aa)). 2 coiled-coil regions span residues 426 to 504 (EAVF…ASSE) and 631 to 744 (KQNQ…SDGS). The tract at residues 718 to 769 (GLQEKQDELEKELAAARELAAEESDGSVKEDDDDDEDSSESGKSEMVNPSFA) is disordered. Positions 721-732 (EKQDELEKELAA) are enriched in basic and acidic residues. Positions 738 to 756 (AEESDGSVKEDDDDDEDSS) are enriched in acidic residues. Residue Ser-741 is modified to Phosphoserine.

It belongs to the AccA family. Acetyl-CoA carboxylase is a heterohexamer composed of biotin carboxyl carrier protein, biotin carboxylase and two subunits each of ACCase subunit alpha and ACCase plastid-coded subunit beta (accD). In terms of tissue distribution, accumulates in fatty acids synthesizing tissues such as embryos, expanding leaves, flower buds, flowers, and developing siliques.

Its subcellular location is the plastid. The protein resides in the chloroplast inner membrane. The catalysed reaction is N(6)-carboxybiotinyl-L-lysyl-[protein] + acetyl-CoA = N(6)-biotinyl-L-lysyl-[protein] + malonyl-CoA. It participates in lipid metabolism; malonyl-CoA biosynthesis; malonyl-CoA from acetyl-CoA: step 1/1. Its function is as follows. Component of the acetyl coenzyme A carboxylase (ACC) complex. First, biotin carboxylase catalyzes the carboxylation of biotin on its carrier protein (BCCP) and then the CO(2) group is transferred by the carboxyltransferase to acetyl-CoA to form malonyl-CoA. This Arabidopsis thaliana (Mouse-ear cress) protein is Acetyl-coenzyme A carboxylase carboxyl transferase subunit alpha, chloroplastic (CAC3).